Consider the following 1565-residue polypeptide: Major cell-surface adhesin PAc (1565 aa).

An N-terminal signal peptide occupies residues 1–38 (MKVKKTYGFRKSKISKTLCGAVLGTVAAVSVAGQKVFA). The span at 42–54 (TTTSDVDTKVVGT) shows a compositional bias: low complexity. The segment at 42–81 (TTTSDVDTKVVGTQTGNPATNLPEAQGSASKEAEQSQTKL) is disordered. Positions 72–81 (KEAEQSQTKL) are enriched in basic and acidic residues. Ag I/II A repeat units lie at residues 146–220 (KKTT…QKTN), 221–302 (AANQ…QEAN), 303–384 (AANE…KKAN), and 385–466 (AANE…QKDL). A heptad repeats of Y-[EQ]-X-X-L-A-X region spans residues 203–448 (EAKLAQYQAD…KRNADAKADY (246 aa)). The interval 461 to 834 (KYQKDLADYP…VNVPKVTKEK (374 aa)) is V-region (lectin-like). 2 disordered regions span residues 827 to 985 (VPKV…PTPP) and 1486 to 1511 (NTVK…PRTS). A P1 repeat occupies 848–887 (TYETEKPLKPAPVAPNYEKEPTPPTRTPDQAEPNKPTPPT). A P2 repeat occupies 888 to 926 (YETEKPLEPAPVEPSYEAEPTPPTRTPDQAEPNKPTPPT). The P3 repeat unit spans residues 927-964 (YETEKPLEPAPVEPSYEAEPTPPTPTPDQPEPNKPVEP). Residues 946 to 961 (PTPPTPTPDQPEPNKP) are compositionally biased toward pro residues. An LPXTG sorting signal motif is present at residues 1532–1536 (LPNTG). Pentaglycyl murein peptidoglycan amidated threonine is present on Thr-1535. A propeptide spans 1536 to 1565 (GVTNNAYMPLLGIIGLVTSFSLLGLKAKKD) (removed by sortase).

The protein belongs to the antigen I/II family.

The protein resides in the secreted. It localises to the cell wall. Functionally, surface protein antigen implicated in dental caries. The sequence is that of Major cell-surface adhesin PAc from Streptococcus mutans.